The primary structure comprises 230 residues: Cyclin-U2-2 (230 aa).

This sequence belongs to the cyclin family. Cyclin U/P subfamily. As to quaternary structure, interacts with CDKA-1. In terms of tissue distribution, expressed in roots and stems. Expressed in the shoot apex, leaf primordia and young leaves.

The sequence is that of Cyclin-U2-2 (CYCU2-2) from Arabidopsis thaliana (Mouse-ear cress).